The sequence spans 366 residues: MTTISDLPEDVVEEILPRVPLTSLSAVRSICKTWNTLSKNRVLCKAAVKKQFLGFIMMDYRVCSMKFHLRNDEGGDLVDDLSIKQVGILDQIEISEVLHCDGLLLFVTKDNSSLVVWNPYLGQTRLIQPSNNFHCSDRYAIGYDNNRNLKILRNFSDYGSSGSNKRGVSFKGNTYILAQGKIRVDSRWKIEAILLSFDFTTERFGPRLQLPFGFYYPQDLFSLSCVREEQLVVLHQSWMVSGELEIWITNKIDPGVVSWTKFLRSISCCRISIQAGSFFINEENQVAVVFDLDEYKGSETCRNQTAYIIGQDEYFKSVNIGEAPNLGRPEKYAPHIYCRPLVCSSYVPSLVPLQINQPDTRKESDD.

Residues 1-51 form the F-box domain; sequence MTTISDLPEDVVEEILPRVPLTSLSAVRSICKTWNTLSKNRVLCKAAVKKQ.

This chain is Putative F-box protein At3g13624, found in Arabidopsis thaliana (Mouse-ear cress).